Consider the following 223-residue polypeptide: Ribosome maturation factor RimM (223 aa).

Residues 142 to 223 form the PRC barrel domain; sequence ADEFYWVDLI…RIVVDWEADY (82 aa).

The protein belongs to the RimM family. Binds ribosomal protein uS19.

The protein localises to the cytoplasm. Its function is as follows. An accessory protein needed during the final step in the assembly of 30S ribosomal subunit, possibly for assembly of the head region. Essential for efficient processing of 16S rRNA. May be needed both before and after RbfA during the maturation of 16S rRNA. It has affinity for free ribosomal 30S subunits but not for 70S ribosomes. The polypeptide is Ribosome maturation factor RimM (Burkholderia multivorans (strain ATCC 17616 / 249)).